The primary structure comprises 444 residues: Glucarate dehydratase (444 aa).

The substrate site is built by H30, T101, Y148, and K203. Residue K205 is the Proton acceptor of the active site. Residues D233, E264, and N287 each contribute to the Mg(2+) site. 233–235 (DPN) contributes to the substrate binding site. Residues N287, 337–339 (HSN), H366, and R420 contribute to the substrate site. The Proton acceptor role is filled by H337.

The protein belongs to the mandelate racemase/muconate lactonizing enzyme family. GlucD subfamily. Mg(2+) serves as cofactor.

It catalyses the reaction D-glucarate = 5-dehydro-4-deoxy-D-glucarate + H2O. The protein operates within carbohydrate acid metabolism; D-glucarate degradation; 2,5-dioxopentanoate from D-glucarate: step 1/2. Its function is as follows. Catalyzes the dehydration of glucarate to 5-keto-4-deoxy-D-glucarate (5-kdGluc). The sequence is that of Glucarate dehydratase (gudD) from Acinetobacter baylyi (strain ATCC 33305 / BD413 / ADP1).